A 777-amino-acid chain; its full sequence is 5-methyltetrahydropteroyltriglutamate--homocysteine methyltransferase (777 aa).

5-methyltetrahydropteroyltri-L-glutamate contacts are provided by residues 17 to 20 and K132; that span reads RELK. Residues 455-457 and E508 contribute to the L-homocysteine site; that span reads IGS. L-methionine-binding positions include 455-457 and E508; that span reads IGS. 5-methyltetrahydropteroyltri-L-glutamate-binding positions include 539–540 and W585; that span reads RC. D623 is an L-homocysteine binding site. D623 is a binding site for L-methionine. Residue E629 participates in 5-methyltetrahydropteroyltri-L-glutamate binding. Positions 665, 667, and 689 each coordinate Zn(2+). Residue H718 is the Proton donor of the active site. C750 serves as a coordination point for Zn(2+).

Belongs to the vitamin-B12 independent methionine synthase family. Zn(2+) is required as a cofactor.

It catalyses the reaction 5-methyltetrahydropteroyltri-L-glutamate + L-homocysteine = tetrahydropteroyltri-L-glutamate + L-methionine. It participates in amino-acid biosynthesis; L-methionine biosynthesis via de novo pathway; L-methionine from L-homocysteine (MetE route): step 1/1. Functionally, catalyzes the transfer of a methyl group from 5-methyltetrahydrofolate to homocysteine resulting in methionine formation. This chain is 5-methyltetrahydropteroyltriglutamate--homocysteine methyltransferase, found in Caulobacter vibrioides (strain ATCC 19089 / CIP 103742 / CB 15) (Caulobacter crescentus).